The primary structure comprises 308 residues: Transaldolase (308 aa).

The active-site Schiff-base intermediate with substrate is K125.

The protein belongs to the transaldolase family. Type 1 subfamily. In terms of assembly, homodimer.

It is found in the cytoplasm. The catalysed reaction is D-sedoheptulose 7-phosphate + D-glyceraldehyde 3-phosphate = D-erythrose 4-phosphate + beta-D-fructose 6-phosphate. It functions in the pathway carbohydrate degradation; pentose phosphate pathway; D-glyceraldehyde 3-phosphate and beta-D-fructose 6-phosphate from D-ribose 5-phosphate and D-xylulose 5-phosphate (non-oxidative stage): step 2/3. Transaldolase is important for the balance of metabolites in the pentose-phosphate pathway. The sequence is that of Transaldolase from Stutzerimonas stutzeri (strain A1501) (Pseudomonas stutzeri).